Reading from the N-terminus, the 257-residue chain is S-methyl-5'-thioadenosine phosphorylase (257 aa).

Phosphate is bound by residues Ser-10, 50–51 (RH), and 83–84 (TA). Residue Met-180 coordinates substrate. Thr-181 is a phosphate binding site. Position 204–206 (204–206 (DYD)) interacts with substrate.

Belongs to the PNP/MTAP phosphorylase family. MTAP subfamily. In terms of assembly, homohexamer. Dimer of a homotrimer.

It carries out the reaction S-methyl-5'-thioadenosine + phosphate = 5-(methylsulfanyl)-alpha-D-ribose 1-phosphate + adenine. The catalysed reaction is adenosine + phosphate = alpha-D-ribose 1-phosphate + adenine. The protein operates within amino-acid biosynthesis; L-methionine biosynthesis via salvage pathway; S-methyl-5-thio-alpha-D-ribose 1-phosphate from S-methyl-5'-thioadenosine (phosphorylase route): step 1/1. Its function is as follows. Catalyzes the reversible phosphorylation of S-methyl-5'-thioadenosine (MTA) to adenine and 5-methylthioribose-1-phosphate. Involved in the breakdown of MTA, a major by-product of polyamine biosynthesis. Responsible for the first step in the methionine salvage pathway after MTA has been generated from S-adenosylmethionine. Has broad substrate specificity with 6-aminopurine nucleosides as preferred substrates. Can also use adenosine as substrate to form ribose 1-phosphate. The polypeptide is S-methyl-5'-thioadenosine phosphorylase (Thermococcus kodakarensis (strain ATCC BAA-918 / JCM 12380 / KOD1) (Pyrococcus kodakaraensis (strain KOD1))).